The following is a 455-amino-acid chain: Ribulose bisphosphate carboxylase large chain (455 aa).

N6,N6,N6-trimethyllysine is present on lysine 5. Asparagine 114 and threonine 164 together coordinate substrate. Catalysis depends on lysine 166, which acts as the Proton acceptor. Lysine 168 lines the substrate pocket. Mg(2+)-binding residues include lysine 192, aspartate 194, and glutamate 195. Lysine 192 is subject to N6-carboxylysine. Histidine 285 serves as the catalytic Proton acceptor. The substrate site is built by arginine 286, histidine 318, and serine 370.

This sequence belongs to the RuBisCO large chain family. Type I subfamily. Heterohexadecamer of 8 large chains and 8 small chains; disulfide-linked. The disulfide link is formed within the large subunit homodimers. Mg(2+) is required as a cofactor. The disulfide bond which can form in the large chain dimeric partners within the hexadecamer appears to be associated with oxidative stress and protein turnover.

Its subcellular location is the plastid. It localises to the chloroplast. It carries out the reaction 2 (2R)-3-phosphoglycerate + 2 H(+) = D-ribulose 1,5-bisphosphate + CO2 + H2O. The enzyme catalyses D-ribulose 1,5-bisphosphate + O2 = 2-phosphoglycolate + (2R)-3-phosphoglycerate + 2 H(+). Functionally, ruBisCO catalyzes two reactions: the carboxylation of D-ribulose 1,5-bisphosphate, the primary event in carbon dioxide fixation, as well as the oxidative fragmentation of the pentose substrate in the photorespiration process. Both reactions occur simultaneously and in competition at the same active site. This chain is Ribulose bisphosphate carboxylase large chain, found in Lupinus nanus (Sky lupine).